Here is a 131-residue protein sequence, read N- to C-terminus: Chorion class high-cysteine HCB protein 12 (131 aa).

Positions 1 to 21 are cleaved as a signal peptide; that stretch reads MAAKLIVFVCAIALVAQSVLG. A left arm region spans residues 22–46; the sequence is TGCGCCCRGCGCGCGGCGCGCCENF. The interval 47–110 is central domain; it reads RVCSNSAAPT…GNGCVGITRS (64 aa). A right arm (Gly-rich tandem repeats) region spans residues 111 to 131; it reads CGGCGCGCGGCGCGCGGCGCC.

It belongs to the chorion protein family.

In terms of biological role, this protein is one of many from the eggshell of the silk moth. In Bombyx mori (Silk moth), this protein is Chorion class high-cysteine HCB protein 12.